The sequence spans 300 residues: F-box protein PP2-A15 (300 aa).

The region spanning 17 to 63 (MGPGLGDIPESCVACVFMYLTPPEICNLAGLNRSFRGAASSDSVWEK) is the F-box domain.

This Arabidopsis thaliana (Mouse-ear cress) protein is F-box protein PP2-A15 (PP2A15).